The following is a 666-amino-acid chain: Neopullulanase 1 (666 aa).

A signal peptide spans 1–29 (MIKLLKPMSLSILLVFILSFSFPFPTAKA). Residues A31, D33, N35, D71, D125, N174, D176, N179, D180, G216, and D218 each coordinate Ca(2+). H296 is a binding site for substrate. Ca(2+) contacts are provided by D305, N309, F310, S312, and E317. Residue R383 participates in substrate binding. D385 serves as the catalytic Nucleophile. Residue E425 is the Proton donor of the active site. Substrate contacts are provided by residues 500–501 (HD), D545, and R549.

The protein belongs to the glycosyl hydrolase 13 family. Ca(2+) serves as cofactor.

The protein resides in the secreted. It catalyses the reaction Hydrolysis of pullulan to panose (6-alpha-D-glucosylmaltose).. In terms of biological role, endohydrolysis of 1,4-alpha-glucosidic linkages in pullulan to form panose. Also hydrolyzes cyclodextrins. The sequence is that of Neopullulanase 1 (tvaI) from Thermoactinomyces vulgaris.